Reading from the N-terminus, the 205-residue chain is Thymidine kinase (205 aa).

ATP contacts are provided by residues Ser-9–Ser-16 and Asp-87–Gln-90. Glu-88 acts as the Proton acceptor in catalysis. Cys-145, Cys-147, Cys-182, and His-185 together coordinate Zn(2+).

The protein belongs to the thymidine kinase family. In terms of assembly, homotetramer.

It is found in the cytoplasm. It catalyses the reaction thymidine + ATP = dTMP + ADP + H(+). This Salmonella paratyphi A (strain ATCC 9150 / SARB42) protein is Thymidine kinase.